The following is a 147-amino-acid chain: Large ribosomal subunit protein uL13 (147 aa).

This sequence belongs to the universal ribosomal protein uL13 family. In terms of assembly, part of the 50S ribosomal subunit.

Its function is as follows. This protein is one of the early assembly proteins of the 50S ribosomal subunit, although it is not seen to bind rRNA by itself. It is important during the early stages of 50S assembly. The protein is Large ribosomal subunit protein uL13 of Pseudothermotoga lettingae (strain ATCC BAA-301 / DSM 14385 / NBRC 107922 / TMO) (Thermotoga lettingae).